A 388-amino-acid chain; its full sequence is 4-hydroxycoumarin synthase 2 (388 aa).

Cysteine 159 is an active-site residue.

The protein belongs to the thiolase-like superfamily. Chalcone/stilbene synthases family. In terms of assembly, homodimer.

The catalysed reaction is 2-hydroxybenzoyl-CoA + malonyl-CoA = 4-hydroxycoumarin + CO2 + 2 CoA. Its function is as follows. Type III polyketide synthase involved preferentially in the biosynthesis of 4-hydroxycoumarin from salicoyl-CoA. Can also use benzoyl-CoA and malonyl-CoA to produce 3,5-dihydroxybiphenyl as a major product and benzoyldiacetic acid lactone as a minor side product. Can also use m-hydroxybenzoyl-CoA as substrate, producing m-hydroxybenzoyl diacetic acid lactone as a derailment product. No activity with p-hydroxybenzoyl-CoA, CoA-linked cinnamic acids or acetyl-CoA. The polypeptide is 4-hydroxycoumarin synthase 2 (BIS3) (Sorbus aucuparia (European mountain ash)).